The chain runs to 66 residues: Photosystem II reaction center protein J (66 aa).

A disordered region spans residues 1–23 (MSGNKSPFPDGRIPDRLPDGRPA). Residues 37-57 (LWLVATAGGMAVLFVVGLFFY) form a helical membrane-spanning segment.

It belongs to the PsbJ family. As to quaternary structure, PSII is composed of 1 copy each of membrane proteins PsbA, PsbB, PsbC, PsbD, PsbE, PsbF, PsbH, PsbI, PsbJ, PsbK, PsbL, PsbM, PsbT, PsbX, PsbY, PsbZ, Psb30/Ycf12, peripheral proteins PsbO, CyanoQ (PsbQ), PsbU, PsbV and a large number of cofactors. It forms dimeric complexes.

It is found in the cellular thylakoid membrane. In terms of biological role, one of the components of the core complex of photosystem II (PSII). PSII is a light-driven water:plastoquinone oxidoreductase that uses light energy to abstract electrons from H(2)O, generating O(2) and a proton gradient subsequently used for ATP formation. It consists of a core antenna complex that captures photons, and an electron transfer chain that converts photonic excitation into a charge separation. This Parasynechococcus marenigrum (strain WH8102) protein is Photosystem II reaction center protein J.